The sequence spans 394 residues: Elongation factor Tu 1 (394 aa).

In terms of domain architecture, tr-type G spans 10 to 204 (KPHVNVGTIG…ALDSYIPEPE (195 aa)). The segment at 19–26 (GHVDHGKT) is G1. 19–26 (GHVDHGKT) is a GTP binding site. Thr-26 serves as a coordination point for Mg(2+). Residues 60-64 (GITIS) form a G2 region. Residues 81–84 (DCPG) form a G3 region. Residues 81 to 85 (DCPGH) and 136 to 139 (NKCD) each bind GTP. The interval 136–139 (NKCD) is G4. The tract at residues 174–176 (SAL) is G5.

This sequence belongs to the TRAFAC class translation factor GTPase superfamily. Classic translation factor GTPase family. EF-Tu/EF-1A subfamily. In terms of assembly, monomer.

The protein localises to the cytoplasm. The catalysed reaction is GTP + H2O = GDP + phosphate + H(+). Its function is as follows. GTP hydrolase that promotes the GTP-dependent binding of aminoacyl-tRNA to the A-site of ribosomes during protein biosynthesis. The chain is Elongation factor Tu 1 from Vibrio vulnificus (strain YJ016).